Here is a 157-residue protein sequence, read N- to C-terminus: Large ribosomal subunit protein uL15 (157 aa).

The protein belongs to the universal ribosomal protein uL15 family. In terms of assembly, part of the 50S ribosomal subunit.

Binds to the 23S rRNA. The protein is Large ribosomal subunit protein uL15 of Ehrlichia ruminantium (strain Gardel).